The chain runs to 500 residues: NAD(P)H-quinone oxidoreductase chain 4, chloroplastic (500 aa).

14 helical membrane passes run 4-24, 35-55, 87-107, 113-130, 134-154, 167-187, 207-227, 242-262, 272-292, 305-325, 330-350, 386-406, 416-436, and 462-482; these read FPWL…IFFL, YTIC…CYHF, LGPV…AWPV, LFHF…GSFS, LLLF…LLSM, FILY…GVGL, VALE…KLPI, HYST…YGLI, AHSI…IYAA, IAYS…SITD, GAIL…FLAG, LALP…GIIT, IAIT…LLSM, and LFVS…PDFV.

The protein belongs to the complex I subunit 4 family.

It is found in the plastid. The protein resides in the chloroplast thylakoid membrane. The enzyme catalyses a plastoquinone + NADH + (n+1) H(+)(in) = a plastoquinol + NAD(+) + n H(+)(out). The catalysed reaction is a plastoquinone + NADPH + (n+1) H(+)(in) = a plastoquinol + NADP(+) + n H(+)(out). The sequence is that of NAD(P)H-quinone oxidoreductase chain 4, chloroplastic from Helianthus annuus (Common sunflower).